Reading from the N-terminus, the 436-residue chain is Probable 4-aminobutyrate aminotransferase (436 aa).

N6-(pyridoxal phosphate)lysine is present on Lys281.

Belongs to the class-III pyridoxal-phosphate-dependent aminotransferase family. Pyridoxal 5'-phosphate is required as a cofactor.

It catalyses the reaction 4-aminobutanoate + 2-oxoglutarate = succinate semialdehyde + L-glutamate. The catalysed reaction is (S)-3-amino-2-methylpropanoate + 2-oxoglutarate = 2-methyl-3-oxopropanoate + L-glutamate. It participates in amino-acid degradation; 4-aminobutanoate degradation. This chain is Probable 4-aminobutyrate aminotransferase (gabT), found in Bacillus subtilis (strain 168).